The following is a 364-amino-acid chain: Spermidine/putrescine import ATP-binding protein PotA (364 aa).

Positions Ile-10–Ile-244 constitute an ABC transporter domain. Gly-46–Thr-53 provides a ligand contact to ATP.

This sequence belongs to the ABC transporter superfamily. Spermidine/putrescine importer (TC 3.A.1.11.1) family. In terms of assembly, the complex is composed of two ATP-binding proteins (PotA), two transmembrane proteins (PotB and PotC) and a solute-binding protein (PotD).

It localises to the cell inner membrane. The enzyme catalyses ATP + H2O + polyamine-[polyamine-binding protein]Side 1 = ADP + phosphate + polyamineSide 2 + [polyamine-binding protein]Side 1.. Its function is as follows. Part of the ABC transporter complex PotABCD involved in spermidine/putrescine import. Responsible for energy coupling to the transport system. This is Spermidine/putrescine import ATP-binding protein PotA from Mesorhizobium japonicum (strain LMG 29417 / CECT 9101 / MAFF 303099) (Mesorhizobium loti (strain MAFF 303099)).